A 120-amino-acid chain; its full sequence is uncharacterized protein (120 aa).

3 helical membrane passes run 24 to 44, 61 to 81, and 86 to 106; these read ALLG…ALCY, IGVV…NLAV, and PLGK…GIVV.

It to M.leprae ML1176.

The protein resides in the cell membrane. This is an uncharacterized protein from Mycobacterium bovis (strain ATCC BAA-935 / AF2122/97).